The sequence spans 375 residues: UDP-4-amino-4,6-dideoxy-N-acetyl-beta-L-altrosamine transaminase (375 aa).

Substrate-binding positions include tyrosine 6, 26-29 (KQLT), alanine 56, and serine 178. An N6-(pyridoxal phosphate)lysine modification is found at lysine 183. Substrate-binding positions include asparagine 228 and 313 to 316 (QVHY).

This sequence belongs to the DegT/DnrJ/EryC1 family.

It carries out the reaction UDP-4-amino-4,6-dideoxy-N-acetyl-beta-L-altrosamine + 2-oxoglutarate = UDP-2-acetamido-2,6-dideoxy-beta-L-arabino-hex-4-ulose + L-glutamate. In terms of biological role, catalyzes the second step in the biosynthesis of pseudaminic acid, a sialic-acid-like sugar that is used to modify flagellin. Uses UDP-2-acetamido-2,6-dideoxy-beta-L-arabino-4-hexulose as substrate producing UDP-4-amino-4,6-dideoxy-beta-L-AltNAc. This Helicobacter pylori (strain ATCC 700392 / 26695) (Campylobacter pylori) protein is UDP-4-amino-4,6-dideoxy-N-acetyl-beta-L-altrosamine transaminase (pseC).